The chain runs to 949 residues: Glycine dehydrogenase (decarboxylating) (949 aa).

Position 704 is an N6-(pyridoxal phosphate)lysine (Lys-704).

It belongs to the GcvP family. As to quaternary structure, the glycine cleavage system is composed of four proteins: P, T, L and H. Pyridoxal 5'-phosphate serves as cofactor.

The catalysed reaction is N(6)-[(R)-lipoyl]-L-lysyl-[glycine-cleavage complex H protein] + glycine + H(+) = N(6)-[(R)-S(8)-aminomethyldihydrolipoyl]-L-lysyl-[glycine-cleavage complex H protein] + CO2. Its function is as follows. The glycine cleavage system catalyzes the degradation of glycine. The P protein binds the alpha-amino group of glycine through its pyridoxal phosphate cofactor; CO(2) is released and the remaining methylamine moiety is then transferred to the lipoamide cofactor of the H protein. The sequence is that of Glycine dehydrogenase (decarboxylating) from Bacteroides fragilis (strain ATCC 25285 / DSM 2151 / CCUG 4856 / JCM 11019 / LMG 10263 / NCTC 9343 / Onslow / VPI 2553 / EN-2).